Consider the following 440-residue polypeptide: GTPase Der (440 aa).

2 consecutive EngA-type G domains span residues 3–167 (PIIA…PYDR) and 176–351 (TRIA…EQYC). Residues 9–16 (GRPNVGKS), 56–60 (DTGGF), 119–122 (NKVD), 182–189 (GRPNVGKS), 229–233 (DTAGI), and 294–297 (NKWD) contribute to the GTP site. The KH-like domain occupies 352 to 436 (KRVTTGELNR…PLKLIFRGRD (85 aa)).

The protein belongs to the TRAFAC class TrmE-Era-EngA-EngB-Septin-like GTPase superfamily. EngA (Der) GTPase family. Associates with the 50S ribosomal subunit.

In terms of biological role, GTPase that plays an essential role in the late steps of ribosome biogenesis. In Citrifermentans bemidjiense (strain ATCC BAA-1014 / DSM 16622 / JCM 12645 / Bem) (Geobacter bemidjiensis), this protein is GTPase Der.